We begin with the raw amino-acid sequence, 483 residues long: Trehalose-6-phosphate synthase (483 aa).

Position 22 (Arg-22) interacts with D-glucose 6-phosphate. 42–43 (GG) contributes to the UDP-alpha-D-glucose binding site. The D-glucose 6-phosphate site is built by Tyr-94 and Asp-148. Positions 290 and 295 each coordinate UDP-alpha-D-glucose. Residue Arg-328 coordinates D-glucose 6-phosphate. Position 393 to 397 (393 to 397 (LVAKE)) interacts with UDP-alpha-D-glucose.

It belongs to the glycosyltransferase 20 family. In terms of assembly, homotetramer.

It carries out the reaction ADP-alpha-D-glucose + D-glucose 6-phosphate = alpha,alpha-trehalose 6-phosphate + ADP + H(+). The catalysed reaction is CDP-alpha-D-glucose + D-glucose 6-phosphate = alpha,alpha-trehalose 6-phosphate + CDP + H(+). The enzyme catalyses GDP-alpha-D-glucose + D-glucose 6-phosphate = alpha,alpha-trehalose 6-phosphate + GDP + H(+). It catalyses the reaction TDP-alpha-D-glucose + D-glucose 6-phosphate = 5-methyl-UDP + alpha,alpha-trehalose 6-phosphate + H(+). It carries out the reaction D-glucose 6-phosphate + UDP-alpha-D-glucose = alpha,alpha-trehalose 6-phosphate + UDP + H(+). The protein operates within glycan biosynthesis; trehalose biosynthesis. In terms of biological role, probably involved in the osmoprotection via the biosynthesis of trehalose and in the production of glycogen and alpha-glucan via the TreS-Pep2 branch involved in the biosynthesis of maltose-1-phosphate (M1P). Catalyzes the transfer of glucose from UDP-glucose (UDP-Glc) to D-glucose 6-phosphate (Glc-6-P) to form trehalose-6-phosphate. Probably also able to use ADP-Glc, CDP-Glc, GDP-Glc and TDP-Glc as glucosyl donors. In Mycobacterium sp. (strain JLS), this protein is Trehalose-6-phosphate synthase.